The primary structure comprises 116 residues: Somatostatin (116 aa).

The signal sequence occupies residues 1–24 (MLSCRLQCALAALSIVLALGGVTG). Residues 25–88 (APSDPRLRQF…QDEMRLELQR (64 aa)) constitute a propeptide that is removed on maturation. Ala43 carries the post-translational modification Alanine amide. An intrachain disulfide couples Cys105 to Cys116.

Belongs to the somatostatin family. Post-translationally, C-terminal amidation of the neuronostatin peptide is required for its biological activity, including for the regulation of mean arterial pressure.

It localises to the secreted. In terms of biological role, inhibits the secretion of pituitary hormones, including that of growth hormone/somatotropin (GH1), PRL, ACTH, luteinizing hormone (LH) and TSH. Also impairs ghrelin- and GnRH-stimulated secretion of GH1 and LH; the inhibition of ghrelin-stimulated secretion of GH1 can be further increased by neuronostatin. Its function is as follows. May enhance low-glucose-induced glucagon release by pancreatic alpha cells. This effect may be mediated by binding to GPR107 and PKA activation. May regulate cardiac contractile function. May compromise cardiomyocyte viability. In the central nervous system, may impair memory retention and may affect hippocampal excitability. May also have anxiolytic and anorexigenic effects. May play a role in arterial pressure regulation. May inhibit basal, but not ghrelin- or GnRH-stimulated secretion of GH1 or LH, but does not affect the release of other pituitary hormones, including PRL, ACTH, FSH or TSH. Potentiates inhibitory action of somatostatin on ghrelin-stimulated secretion of GH1, but not that on GnRH-stimulated secretion of LH. The protein is Somatostatin (SST) of Bos taurus (Bovine).